The chain runs to 198 residues: N-acetyltransferase 9-like protein (198 aa).

One can recognise an N-acetyltransferase domain in the interval 34–178; sequence EEIRRLTGSE…KEITMELPGE (145 aa).

The protein belongs to the acetyltransferase family. GNAT subfamily.

The protein is N-acetyltransferase 9-like protein of Caenorhabditis briggsae.